The chain runs to 87 residues: MKTFESLFAELSEKAQTRPEGSLTVDELDKGTHFIGKKIIEEAGETWMAAEYEGADRTAEEMSQLLYHVQVMMIKHGLTLEDVYKHL.

Belongs to the PRA-PH family.

Its subcellular location is the cytoplasm. It catalyses the reaction 1-(5-phospho-beta-D-ribosyl)-ATP + H2O = 1-(5-phospho-beta-D-ribosyl)-5'-AMP + diphosphate + H(+). Its pathway is amino-acid biosynthesis; L-histidine biosynthesis; L-histidine from 5-phospho-alpha-D-ribose 1-diphosphate: step 2/9. The sequence is that of Phosphoribosyl-ATP pyrophosphatase from Bifidobacterium longum (strain DJO10A).